Here is a 445-residue protein sequence, read N- to C-terminus: Endoplasmic reticulum membrane adapter protein XK (445 aa).

Residues 1-2 (MK) lie on the Cytoplasmic side of the membrane. The helical transmembrane segment at 3–23 (FPASVLASVFLFVAETMAALY) threads the bilayer. The Extracellular segment spans residues 24 to 37 (LSSTYRSAGDRMWQ). The helical transmembrane segment at 38 to 58 (ALTLFFSLMPCTLVQLTLLFV) threads the bilayer. Residues 59 to 68 (HRDLSRDRPL) are Cytoplasmic-facing. Residues 69–89 (VLLMHLLQLGPLYRCCEVFCI) form a helical membrane-spanning segment. Topologically, residues 90–140 (YCQSDQNEEPYVSITKKRQMPKDGLSEEVEKEVGQSEGKLFTHRSAFSRAS) are extracellular. S115 is subject to Phosphoserine. A helical membrane pass occupies residues 141–161 (VIQAFLGSAPQLTLQLYITVL). Over 162–170 (EQNITTGRF) the chain is Cytoplasmic. A helical transmembrane segment spans residues 171–191 (IMVLSLLSIVYGALRCNILAI). The Extracellular segment spans residues 192 to 207 (KIKYDEYEVKVKPLAY). The chain crosses the membrane as a helical span at residues 208–228 (VCIFLWRSFEIATRVIVLVLF). The Cytoplasmic segment spans residues 229–234 (TSVLKI). The chain crosses the membrane as a helical span at residues 235–255 (WVVVVILVNFFSFFLYPWILF). Topologically, residues 256–276 (WNSGSPFPENIEKALTRVGTT) are extracellular. The chain crosses the membrane as a helical span at residues 277-297 (IVLGFLTLLYAGINMFCWSAV). Topologically, residues 298–316 (QLKIDNPELISKSQNWYRL) are cytoplasmic. A helical membrane pass occupies residues 317–337 (LIYYMMRFVENSVLLLLWFFF). The Extracellular segment spans residues 338-348 (KTDIYMYVCAP). A helical membrane pass occupies residues 349–369 (LLILQLLIGYCTSILFMLVFY). Over 370 to 445 (QFFHPCKKLF…IWTAVDLCST (76 aa)) the chain is Cytoplasmic.

The protein belongs to the XK family. Heterodimer with Kell; disulfide-linked. Interacts with VPS13A.

It localises to the endoplasmic reticulum membrane. Functionally, recruits the lipid transfer protein VPS13A from lipid droplets to the endoplasmic reticulum (ER) membrane. The chain is Endoplasmic reticulum membrane adapter protein XK from Rattus norvegicus (Rat).